A 490-amino-acid chain; its full sequence is Cytochrome P450 2C28 (490 aa).

The residue at position 127 (S127) is a Phosphoserine. N6-acetyllysine is present on residues K249 and K375. C435 serves as a coordination point for heme.

Belongs to the cytochrome P450 family. Requires heme as cofactor. In terms of tissue distribution, liver.

It localises to the endoplasmic reticulum membrane. It is found in the microsome membrane. The catalysed reaction is an organic molecule + reduced [NADPH--hemoprotein reductase] + O2 = an alcohol + oxidized [NADPH--hemoprotein reductase] + H2O + H(+). In terms of biological role, catalyzes the N-demethylation of aminopyrine and benzphetamine, but does not catalyze the hydroxylation of tolbutamide, testosterone, and progesterone. The sequence is that of Cytochrome P450 2C28 (CYP2C28) from Mesocricetus auratus (Golden hamster).